Consider the following 367-residue polypeptide: MAHAELATEQMLLKEIGRTERNRRQIRGWLAAVLFALFALVLVGGATRLTESGLSITEWKPVHGVIPPLSAEEWEEEFRLYQRIPQYEQINKGMTVDEFKTIFWWEWAHRLLARGIGVIFALPLFFFWVTGRIERRLRLPLLGILALGGFQGFIGWWMVSSGLAERTAVSQYRLATHLTIACLIFAACMWIYRGLCPHSDDAHPTKRSQGMAGAIAIMSLFQIYLGAIVAGLDAGLSYNTWPLMDGAIVPGGLFVQQPAWINLFENPKTVQFVHRLGAYLLFALALWHMIASLRAAPETTHARRSVLLFALVTVQAAIGITTLLLQVPIGWGVLHQGGALVVLGFAIAHWRGFVGTYPRDTAIEMRD.

5 helical membrane passes run 26-46 (IRGW…VGGA), 111-131 (LLAR…WVTG), 139-159 (LPLL…WWMV), 174-194 (LATH…IYRG), and 212-232 (AGAI…VAGL). Histidine 274 lines the heme pocket. The next 3 helical transmembrane spans lie at 276–296 (LGAY…LRAA), 305–325 (SVLL…TLLL), and 327–347 (VPIG…GFAI). Histidine 335 is a binding site for heme.

This sequence belongs to the COX15/CtaA family. Type 2 subfamily. Interacts with CtaB. The cofactor is heme b.

It localises to the cell membrane. It carries out the reaction Fe(II)-heme o + 2 A + H2O = Fe(II)-heme a + 2 AH2. The protein operates within porphyrin-containing compound metabolism; heme A biosynthesis; heme A from heme O: step 1/1. In terms of biological role, catalyzes the conversion of heme O to heme A by two successive hydroxylations of the methyl group at C8. The first hydroxylation forms heme I, the second hydroxylation results in an unstable dihydroxymethyl group, which spontaneously dehydrates, resulting in the formyl group of heme A. This chain is Heme A synthase, found in Rhizobium meliloti (strain 1021) (Ensifer meliloti).